The primary structure comprises 64 residues: DNA-directed RNA polymerase subunit Rpo10 (64 aa).

Zn(2+)-binding residues include C7, C10, C45, and C46.

This sequence belongs to the archaeal Rpo10/eukaryotic RPB10 RNA polymerase subunit family. Part of the RNA polymerase complex. It depends on Zn(2+) as a cofactor.

It localises to the cytoplasm. It catalyses the reaction RNA(n) + a ribonucleoside 5'-triphosphate = RNA(n+1) + diphosphate. DNA-dependent RNA polymerase (RNAP) catalyzes the transcription of DNA into RNA using the four ribonucleoside triphosphates as substrates. This is DNA-directed RNA polymerase subunit Rpo10 from Haloquadratum walsbyi (strain DSM 16790 / HBSQ001).